The chain runs to 33 residues: Glucagon-2 (33 aa).

This sequence belongs to the glucagon family.

The protein localises to the secreted. Its function is as follows. Promotes hydrolysis of glycogen and lipids, and raises the blood sugar level. The sequence is that of Glucagon-2 (gcg2) from Oreochromis niloticus (Nile tilapia).